The following is a 230-amino-acid chain: Uracil-DNA glycosylase (230 aa).

Aspartate 65 functions as the Proton acceptor in the catalytic mechanism.

The protein belongs to the uracil-DNA glycosylase (UDG) superfamily. UNG family.

It localises to the cytoplasm. It carries out the reaction Hydrolyzes single-stranded DNA or mismatched double-stranded DNA and polynucleotides, releasing free uracil.. In terms of biological role, excises uracil residues from the DNA which can arise as a result of misincorporation of dUMP residues by DNA polymerase or due to deamination of cytosine. In Lactiplantibacillus plantarum (strain ATCC BAA-793 / NCIMB 8826 / WCFS1) (Lactobacillus plantarum), this protein is Uracil-DNA glycosylase.